The following is a 295-amino-acid chain: Polyadenylate-binding protein 2-B (295 aa).

A disordered region spans residues 1-102; the sequence is MAAVSSVASL…EEPGELTGDQ (102 aa). Gly residues-rich tracts occupy residues 19 to 31 and 71 to 81; these read LRGG…GGQD and GRGGSGGGAGG. A compositionally biased stretch (acidic residues) spans 83–96; sequence EELEDEELEEEEPG. Positions 106-140 form a coiled coil; it reads DPELEAIKARVREMEEEAEKLKELQNEVEKQMNMS. Positions 145-295 are necessary for homooligomerization; sequence NAGPVIMSVE…ARATSWYTPY (151 aa). An RRM domain is found at 162–239; that stretch reads RSIYVGNVDY…RQIKVVPKRT (78 aa).

In terms of assembly, monomer and homooligomer. Binds RNA as a monomer and oligomerizes when bound to poly(A).

The protein localises to the nucleus. The protein resides in the cytoplasm. Its function is as follows. Involved in the 3'-end formation of mRNA precursors (pre-mRNA) by the addition of a poly(A) tail of 200-250 nt to the upstream cleavage product. Stimulates poly(A) polymerase (PAPOLA) conferring processivity on the poly(A) tail elongation reaction and also controls the poly(A) tail length. Increases the affinity of poly(A) polymerase for RNA. Binds to poly(A) and to poly(G) with high affinity. May protect the poly(A) tail from degradation. The sequence is that of Polyadenylate-binding protein 2-B (pabpn1-b) from Xenopus laevis (African clawed frog).